Here is a 263-residue protein sequence, read N- to C-terminus: Putative S-adenosyl-L-methionine-dependent methyltransferase Mkms_0098 (263 aa).

Residues Asp121 and 150–151 contribute to the S-adenosyl-L-methionine site; that span reads ES.

Belongs to the UPF0677 family.

Exhibits S-adenosyl-L-methionine-dependent methyltransferase activity. This is Putative S-adenosyl-L-methionine-dependent methyltransferase Mkms_0098 from Mycobacterium sp. (strain KMS).